Consider the following 329-residue polypeptide: Mitochondrial substrate carrier family protein W (329 aa).

Residues 1–39 (MTTNNSNDNNKRYGIIKQQLQQQQQQHHQQHEQHSRLVE) are Mitochondrial intermembrane-facing. 3 Solcar repeats span residues 34–119 (HSRL…CKEL), 133–221 (ESPL…FKSI), and 231–321 (LGIV…IKKF). The chain crosses the membrane as a helical span at residues 40–60 (MTAGCGAGFMASLFTTPLDVI). Topologically, residues 61–90 (KTTLQVDNSSNKTIMSTVKSILDRKGGVKN) are mitochondrial matrix. A helical transmembrane segment spans residues 91-111 (LYLGLKPTLVGQIPSWAVYFS). Topologically, residues 112–135 (TYTFCKELFTKENDKHSLLEKESP) are mitochondrial intermembrane. Residues 136 to 156 (LIFMTSAIIAGAATSICTSPI) form a helical membrane-spanning segment. The Mitochondrial matrix segment spans residues 157-193 (WLIKTRFITQEMVGRQKKYRGIVHSMVSIYHEEGFRG). Residues 194–214 (LYKGLGPSLLGVLHVGVQFPL) traverse the membrane as a helical segment. Residues 215–230 (YEKFKSILKEKNKNKE) lie on the Mitochondrial intermembrane side of the membrane. The helical transmembrane segment at 231 to 251 (LGIVEIMIASSVSKIIASVVA) threads the bilayer. Residues 252–296 (YPHEVLRARSQDSSPDSPNRTYRGNIIQMFKQIVREEGWRGLYRG) are Mitochondrial matrix-facing. Residues 297-315 (MGVNLLRVTPSCVITFTSY) traverse the membrane as a helical segment. Residues 316-329 (EYIKKFLSQNQNHF) lie on the Mitochondrial intermembrane side of the membrane.

This sequence belongs to the mitochondrial carrier (TC 2.A.29) family.

The protein localises to the mitochondrion inner membrane. Functionally, mitochondrial solute carriers shuttle metabolites, nucleotides, and cofactors through the mitochondrial inner membrane. The protein is Mitochondrial substrate carrier family protein W (mcfW) of Dictyostelium discoideum (Social amoeba).